We begin with the raw amino-acid sequence, 38 residues long: Cytochrome b6-f complex subunit 5 (38 aa).

Residues 5-25 (LLLGIVLGLIPVTLAGLFVAA) traverse the membrane as a helical segment.

Belongs to the PetG family. As to quaternary structure, the 4 large subunits of the cytochrome b6-f complex are cytochrome b6, subunit IV (17 kDa polypeptide, PetD), cytochrome f and the Rieske protein, while the 4 small subunits are PetG, PetL, PetM and PetN. The complex functions as a dimer.

The protein localises to the cellular thylakoid membrane. Functionally, component of the cytochrome b6-f complex, which mediates electron transfer between photosystem II (PSII) and photosystem I (PSI), cyclic electron flow around PSI, and state transitions. PetG is required for either the stability or assembly of the cytochrome b6-f complex. This is Cytochrome b6-f complex subunit 5 from Synechocystis sp. (strain ATCC 27184 / PCC 6803 / Kazusa).